The chain runs to 200 residues: TATA-box-binding protein 2 (200 aa).

Repeat copies occupy residues 25-101 (LQNI…ARII) and 115-192 (IQNI…YPVL).

It belongs to the TBP family. In terms of assembly, belongs to the TFIID complex together with the TBP-associated factors (TAFs). Binds DNA as monomer.

The protein localises to the nucleus. Its function is as follows. General transcription factor that functions at the core of the DNA-binding multiprotein factor TFIID. Binding of TFIID to the TATA box is the initial transcriptional step of the pre-initiation complex (PIC), playing a role in the activation of eukaryotic genes transcribed by RNA polymerase II. This Zea mays (Maize) protein is TATA-box-binding protein 2 (TBP2).